The sequence spans 819 residues: Ion-translocating oxidoreductase complex subunit C (819 aa).

4Fe-4S ferredoxin-type domains follow at residues 368–398 (EYAEPEAEQACIRCSSCSDACPVNLMPQQLY) and 408–437 (KSEEYALKDCIECGICAYVCPSHIPLIQYF). Positions 378, 381, 384, 388, 417, 420, 423, and 427 each coordinate [4Fe-4S] cluster. Composition is skewed to basic and acidic residues over residues 465-477 (QARMEREEQERKA) and 485-513 (ARREELAQTKGEDPVKAALERLKAKKANE). 3 disordered regions span residues 465 to 568 (QARM…NAKK), 580 to 677 (AKKL…TALD), and 692 to 793 (AKKL…PKKA). Polar residues-rich tracts occupy residues 554–565 (VENQEQQTQPTN) and 587–601 (NSTSEAISNSQTAEN). Basic and acidic residues predominate over residues 602–614 (QVEKTKSAVEKTQ). Residues 641 to 656 (QTNSTSEAISNSQTAE) are compositionally biased toward polar residues. The segment covering 658 to 671 (EVEKTKSAVEKTEE) has biased composition (basic and acidic residues). 2 stretches are compositionally biased toward polar residues: residues 699–712 (NSASEAISNSQTAE) and 755–768 (NSTSEAISNSQTAE). Residues 770–782 (EVEKTKSAVEKTQ) are compositionally biased toward basic and acidic residues.

Belongs to the 4Fe4S bacterial-type ferredoxin family. RnfC subfamily. The complex is composed of six subunits: RnfA, RnfB, RnfC, RnfD, RnfE and RnfG. It depends on [4Fe-4S] cluster as a cofactor.

It is found in the cell inner membrane. Functionally, part of a membrane-bound complex that couples electron transfer with translocation of ions across the membrane. The sequence is that of Ion-translocating oxidoreductase complex subunit C from Haemophilus influenzae (strain ATCC 51907 / DSM 11121 / KW20 / Rd).